The chain runs to 388 residues: Dual specificity mitogen-activated protein kinase kinase 1 (388 aa).

The interval 1 to 20 (PIQLNPAPDGSAVNGTSSAE) is disordered. Residues 61-356 (FEKISELGAG…LKQLMIHAFI (296 aa)) enclose the Protein kinase domain. ATP-binding positions include 67–75 (LGAGNGGVV) and Lys-90. The active-site Proton acceptor is the Asp-183. Phosphoserine; by RAF is present on residues Ser-211 and Ser-215. A disordered region spans residues 275 to 299 (DSPVTETSPRQRAPGRPMSSYGSDS).

This sequence belongs to the protein kinase superfamily. STE Ser/Thr protein kinase family. MAP kinase kinase subfamily. In terms of processing, MAPKK is itself dependent on Ser/Thr phosphorylation for activity catalyzed by MAP kinase kinase kinases (RAF or MEKK1).

The protein localises to the cytoplasm. It localises to the cytoskeleton. Its subcellular location is the microtubule organizing center. The protein resides in the centrosome. It is found in the spindle pole body. The protein localises to the nucleus. The catalysed reaction is L-seryl-[protein] + ATP = O-phospho-L-seryl-[protein] + ADP + H(+). The enzyme catalyses L-threonyl-[protein] + ATP = O-phospho-L-threonyl-[protein] + ADP + H(+). It catalyses the reaction L-tyrosyl-[protein] + ATP = O-phospho-L-tyrosyl-[protein] + ADP + H(+). Dual specificity protein kinase which acts as an essential component of the MAP kinase signal transduction pathway. Binding of extracellular ligands such as growth factors, cytokines and hormones to their cell-surface receptors activates RAS and this initiates RAF1 activation. RAF1 then further activates the dual-specificity protein kinases MAP2K1/MEK1 and MAP2K2/MEK2. Both MAP2K1/MEK1 and MAP2K2/MEK2 function specifically in the MAPK/ERK cascade, and catalyze the concomitant phosphorylation of a threonine and a tyrosine residue in a Thr-Glu-Tyr sequence located in the extracellular signal-regulated kinases MAPK3/ERK1 and MAPK1/ERK2, leading to their activation and further transduction of the signal within the MAPK/ERK cascade. Depending on the cellular context, this pathway mediates diverse biological functions such as cell growth, adhesion, survival and differentiation predominantly through the regulation of transcription, metabolism and cytoskeletal rearrangements. The sequence is that of Dual specificity mitogen-activated protein kinase kinase 1 (MAP2K1) from Serinus canaria (Island canary).